The chain runs to 185 residues: Ribosome-recycling factor (185 aa).

The protein belongs to the RRF family.

The protein resides in the cytoplasm. Its function is as follows. Responsible for the release of ribosomes from messenger RNA at the termination of protein biosynthesis. May increase the efficiency of translation by recycling ribosomes from one round of translation to another. In Alcanivorax borkumensis (strain ATCC 700651 / DSM 11573 / NCIMB 13689 / SK2), this protein is Ribosome-recycling factor.